A 460-amino-acid chain; its full sequence is Phosphoglucomutase (460 aa).

The Phosphoserine intermediate role is filled by S103. Position 103 (S103) interacts with Mg(2+). Residues 103 to 104 (SH) and K113 each bind substrate. Mg(2+) contacts are provided by D239, D241, and D243. Substrate contacts are provided by residues 243–244 (DR), T303, and 322–324 (EMS).

It belongs to the phosphohexose mutase family. Requires Mg(2+) as cofactor.

The protein resides in the cytoplasm. The catalysed reaction is alpha-D-glucose 1-phosphate = alpha-D-glucose 6-phosphate. In terms of biological role, this enzyme participates in both the breakdown and synthesis of glucose. The sequence is that of Phosphoglucomutase (pgm) from Neisseria meningitidis serogroup B (strain ATCC BAA-335 / MC58).